The primary structure comprises 144 residues: MTLAFTTFAISKINNSSTNEDSKVMILCDEHHPFEKGYFKSAIRAFGNSIKLGLMGNSRPEDAASIFQDKNIPHDLTTEEFRLQLVCMAFSWFIFGLFIACLLLCITLVLTSRYPGENENKATEVVPSSNIDDEEKQLSLSDMI.

N-linked (GlcNAc...) asparagine glycosylation is found at N14 and N15. Residues 90 to 110 (FSWFIFGLFIACLLLCITLVL) traverse the membrane as a helical segment. The disordered stretch occupies residues 120-144 (NKATEVVPSSNIDDEEKQLSLSDMI).

Its subcellular location is the membrane. This is an uncharacterized protein from Saccharomyces cerevisiae (strain ATCC 204508 / S288c) (Baker's yeast).